A 595-amino-acid chain; its full sequence is Elongation factor 4 (595 aa).

One can recognise a tr-type G domain in the interval 2-184 (SHIRNFSIIA…RLVATIPPPT (183 aa)). Residues 14-19 (DHGKST) and 131-134 (NKMD) contribute to the GTP site.

This sequence belongs to the TRAFAC class translation factor GTPase superfamily. Classic translation factor GTPase family. LepA subfamily.

Its subcellular location is the cell inner membrane. The catalysed reaction is GTP + H2O = GDP + phosphate + H(+). In terms of biological role, required for accurate and efficient protein synthesis under certain stress conditions. May act as a fidelity factor of the translation reaction, by catalyzing a one-codon backward translocation of tRNAs on improperly translocated ribosomes. Back-translocation proceeds from a post-translocation (POST) complex to a pre-translocation (PRE) complex, thus giving elongation factor G a second chance to translocate the tRNAs correctly. Binds to ribosomes in a GTP-dependent manner. This Pseudomonas syringae pv. tomato (strain ATCC BAA-871 / DC3000) protein is Elongation factor 4.